The following is a 445-amino-acid chain: StAR-related lipid transfer protein 3 (445 aa).

The Cytoplasmic portion of the chain corresponds to 1-51 (MSKLPRELTRDLERSLPAVASLGSSLSHSQSLSSHLLPPPEKRRAISDVRR). Positions 46–217 (ISDVRRTFCL…YSPPESFAGS (172 aa)) constitute an MENTAL domain. The chain crosses the membrane as a helical span at residues 52–72 (TFCLFVTFDLLFISLLWIIEL). Over 73–94 (NTNTGIRKNLEQEIIQYNFKTS) the chain is Extracellular. A helical transmembrane segment spans residues 95 to 115 (FFDIFVLAFFRFSGLLLGYAV). Topologically, residues 116–120 (LRLRH) are cytoplasmic. Residues 121–141 (WWVIAVTTLVSSAFLIVKVIL) traverse the membrane as a helical segment. At 142 to 148 (SELLSKG) the chain is on the extracellular side. A helical transmembrane segment spans residues 149–169 (AFGYLLPIVSFVLAWLETWFL). The Cytoplasmic portion of the chain corresponds to 170-445 (DFKVLPQEAE…QRISELGARA (276 aa)). Positions 206 to 212 (QFYSPPE) match the FFAT motif. Position 209 is a phosphoserine (Ser209). One can recognise an START domain in the interval 230-443 (SFSAQEREYI…LRQRISELGA (214 aa)).

The protein belongs to the STARD3 family. As to quaternary structure, homodimer. Interacts (via the MENTAL domain) with STARD3NL. Interacts (via phosphorylated FFAT motif) with VAPA (via MSP domain). Interacts (via phosphorylated FFAT motif) with VAPB (via MSP domain). Interacts (via phosphorylated FFAT motif) with MOSPD2 (via MSP domain); this interaction allows enrichment of MOSPD2 around endosomes. Post-translationally, phosphorylation at Ser-209 is necessary and sufficient for the direct interaction of the phosphorylated FFAT motif with the MSP domain of MOSPD2, VAPA and VAPB and allows the tethering of two membranes that participates in the formation of ER-endosome contacts. Phosphorylation of the FFAT motif leads to conformation changes. Additional phosphorylations around the core FFAT motif (QFYSPPE) are not essential but strengthen the interaction with MOSPD2, VAPA and VAPB. Phosphorylation at Ser-209 of FFAT motif drives membrane tethering between the endoplasmic reticulum and late endosomes via interaction with VAPA and VAPB that in turn allows the efficient transport of sterol mediated by the START domain. Expressed in retina.

It is found in the late endosome membrane. The catalysed reaction is cholesterol(in) = cholesterol(out). Functionally, sterol-binding protein that mediates cholesterol transport from the endoplasmic reticulum to endosomes. The sterol transport mechanism is triggered by phosphorylation of FFAT motif that leads to membrane tethering between the endoplasmic reticulum and late endosomes via interaction with VAPA and VAPB. Acts as a lipid transfer protein that redirects sterol to the endosome at the expense of the cell membrane and favors membrane formation inside endosomes. May also mediate cholesterol transport between other membranes, such as mitochondria membrane or cell membrane. However, such results need additional experimental evidences; probably mainly mediates cholesterol transport from the endoplasmic reticulum to endosomes. Does not activate transcriptional cholesterol sensing. Able to bind other lipids, such as lutein, a xanthophyll carotenoids that form the macular pigment of the retina. This chain is StAR-related lipid transfer protein 3, found in Homo sapiens (Human).